The sequence spans 385 residues: Enoyl-[acyl-carrier-protein] reductase, mitochondrial (385 aa).

The Proton donor role is filled by tyrosine 78. Residues asparagine 162, 190-193 (TSGV), 213-215 (RDR), 288-291 (YGGM), 313-315 (YWV), and lysine 378 contribute to the NADP(+) site.

The protein belongs to the zinc-containing alcohol dehydrogenase family. Quinone oxidoreductase subfamily. As to quaternary structure, homodimer.

The protein resides in the mitochondrion matrix. It carries out the reaction a 2,3-saturated acyl-[ACP] + NADP(+) = a (2E)-enoyl-[ACP] + NADPH + H(+). Functionally, catalyzes the NADPH-dependent reduction of trans-2-enoyl thioesters in mitochondrial fatty acid synthesis (fatty acid synthesis type II). Fatty acid chain elongation in mitochondria uses acyl carrier protein (ACP) as an acyl group carrier, but the enzyme accepts both ACP and CoA thioesters as substrates in vitro. Required for respiration and the maintenance of the mitochondrial compartment. The chain is Enoyl-[acyl-carrier-protein] reductase, mitochondrial (ETR1) from Candida glabrata (strain ATCC 2001 / BCRC 20586 / JCM 3761 / NBRC 0622 / NRRL Y-65 / CBS 138) (Yeast).